Here is a 396-residue protein sequence, read N- to C-terminus: Elongation factor Tu (396 aa).

One can recognise a tr-type G domain in the interval 10-206 (KPHVNVGTIG…ALDSFIPEPT (197 aa)). Residues 19–26 (GHVDHGKT) are G1. 19–26 (GHVDHGKT) lines the GTP pocket. Thr-26 contributes to the Mg(2+) binding site. The tract at residues 60 to 64 (GITIS) is G2. The tract at residues 81–84 (DCPG) is G3. Residues 81 to 85 (DCPGH) and 136 to 139 (NKAD) each bind GTP. Residues 136–139 (NKAD) form a G4 region. The segment at 174 to 176 (SAR) is G5.

The protein belongs to the TRAFAC class translation factor GTPase superfamily. Classic translation factor GTPase family. EF-Tu/EF-1A subfamily. Monomer.

It is found in the cytoplasm. The enzyme catalyses GTP + H2O = GDP + phosphate + H(+). Functionally, GTP hydrolase that promotes the GTP-dependent binding of aminoacyl-tRNA to the A-site of ribosomes during protein biosynthesis. The chain is Elongation factor Tu from Xanthomonas euvesicatoria pv. vesicatoria (strain 85-10) (Xanthomonas campestris pv. vesicatoria).